A 308-amino-acid polypeptide reads, in one-letter code: ADP-L-glycero-D-manno-heptose-6-epimerase (308 aa).

NADP(+)-binding positions include methionine 10–isoleucine 11, aspartate 31–asparagine 32, lysine 38, lysine 53, glutamate 75–serine 79, and asparagine 92. Tyrosine 139 (proton acceptor) is an active-site residue. Residue lysine 143 coordinates NADP(+). Asparagine 168 contributes to the substrate binding site. 2 residues coordinate NADP(+): valine 169 and lysine 177. Lysine 177 (proton acceptor) is an active-site residue. Substrate is bound by residues serine 179, histidine 186, phenylalanine 200–serine 203, arginine 208, and tyrosine 271.

Belongs to the NAD(P)-dependent epimerase/dehydratase family. HldD subfamily. As to quaternary structure, homopentamer. NADP(+) serves as cofactor.

It catalyses the reaction ADP-D-glycero-beta-D-manno-heptose = ADP-L-glycero-beta-D-manno-heptose. It participates in nucleotide-sugar biosynthesis; ADP-L-glycero-beta-D-manno-heptose biosynthesis; ADP-L-glycero-beta-D-manno-heptose from D-glycero-beta-D-manno-heptose 7-phosphate: step 4/4. In terms of biological role, catalyzes the interconversion between ADP-D-glycero-beta-D-manno-heptose and ADP-L-glycero-beta-D-manno-heptose via an epimerization at carbon 6 of the heptose. The chain is ADP-L-glycero-D-manno-heptose-6-epimerase from Mannheimia succiniciproducens (strain KCTC 0769BP / MBEL55E).